The primary structure comprises 113 residues: Cell cycle protein GpsB (113 aa).

A coiled-coil region spans residues 36–65; that stretch reads IKDYETYAALVKSLRQEIADLKEELARKPQ. Positions 61-82 are disordered; it reads ARKPQVSSAPSPSHPDPIDVAA.

This sequence belongs to the GpsB family. In terms of assembly, forms polymers through the coiled coil domains. Interacts with PBP1, MreC and EzrA.

Its subcellular location is the cytoplasm. Its function is as follows. Divisome component that associates with the complex late in its assembly, after the Z-ring is formed, and is dependent on DivIC and PBP2B for its recruitment to the divisome. Together with EzrA, is a key component of the system that regulates PBP1 localization during cell cycle progression. Its main role could be the removal of PBP1 from the cell pole after pole maturation is completed. Also contributes to the recruitment of PBP1 to the division complex. Not essential for septum formation. The polypeptide is Cell cycle protein GpsB (Streptococcus pneumoniae (strain Hungary19A-6)).